The chain runs to 1113 residues: Nucleoporin NUP116/NSP116 (1113 aa).

A disordered region spans residues 1–35 (MFGVSRGAFPSATTQPFGSTGSTFGGQQQQQQPVA). FG repeat units lie at residues 2-3 (FG), 17-18 (FG), 24-25 (FG), and 40-41 (FG). Low complexity predominate over residues 13–33 (TTQPFGSTGSTFGGQQQQQQP). The interval 49 to 91 (TQAPAFGNFGNQTSNSPFGMSGSTTANGTPFGQSQLTNNNASG) is disordered. A GLFG 1; approximate repeat occupies 55–58 (GNFG). 3 FG repeats span residues 66–67 (FG), 79–80 (FG), and 94–95 (FG). Residues 92-172 (SIFGGMGNNT…AGRKFGTSQN (81 aa)) form an interaction with AFG2 region. The tract at residues 110 to 166 (VVPNSTAGTSIKPFTTFEEKDPTTGVINVFQSITCMPEYRNFSFEELRFQDYQAGRK) is GLE2 binding sequence (GLEBS). The tract at residues 160 to 362 (DYQAGRKFGT…AKPASGGLFG (203 aa)) is interaction with MEX67, not KAP95. 2 FG repeats span residues 167–168 (FG) and 189–190 (FG). Residues 205–208 (GLFG) form a GLFG 2 repeat. The GLFG 3; approximate repeat unit spans residues 214–217 (GMFG). The GLFG 4; approximate repeat unit spans residues 224–227 (GGFG). The stretch at 235-238 (GLFG) is one GLFG 5 repeat. An FG 10 repeat occupies 249 to 250 (FG). GLFG repeat units lie at residues 259-262 (GLFG), 276-279 (GLFG), and 288-291 (GLFG). Low complexity predominate over residues 265–279 (TNNPTNGTNNTGLFG). The interval 265 to 341 (TNNPTNGTNN…SNANANGGAF (77 aa)) is disordered. A compositionally biased stretch (polar residues) spans 280–304 (QQNSNTNGGLFGQQQNSFGANNVSN). The stretch at 297–298 (FG) is one FG 11 repeat. The GLFG 9; approximate repeat unit spans residues 306 to 309 (GAFG). One copy of the GLFG 10; approximate repeat lies at 327–330 (GIFG). A compositionally biased stretch (low complexity) spans 330 to 341 (GQSNANANGGAF). A GLFG 11; approximate repeat occupies 339 to 342 (GAFG). One copy of the FG 12 repeat lies at 351–352 (FG). A GLFG 12 repeat occupies 359 to 362 (GLFG). Positions 362–535 (GQSAGSKAFG…GAKPTGFGNT (174 aa)) are sufficient for interaction with MEX67 and KAP95. One copy of the FG 13 repeat lies at 370–371 (FG). The segment at 371-606 (GMNTNPTGTT…NPASTSGGLF (236 aa)) is disordered. GLFG repeat units follow at residues 382–385 (GLFG), 395–398 (GLFG), 407–410 (GLFG), and 420–423 (GLFG). The span at 410–438 (GQNNQSQNQSGLFGQQNSSNAFGQPQQQG) shows a compositional bias: low complexity. Residues 431–432 (FG) form an FG 14 repeat. GLFG repeat units lie at residues 439–442 (GLFG) and 448–451 (GLFG). The span at 451 to 464 (GQQQGASTFASGNA) shows a compositional bias: polar residues. Composition is skewed to low complexity over residues 465-478 (QNNSIFGQNNQQQQ) and 485-522 (GQQNNQSQSQPGGLFGQTNQNNNQPFGQNGLQQPQQNN). Residues 470-471 (FG) form an FG 15 repeat. GLFG repeat units lie at residues 482 to 485 (GLFG) and 497 to 500 (GLFG). FG repeat units lie at residues 510 to 511 (FG), 525 to 526 (FG), and 532 to 533 (FG). Polar residues predominate over residues 532-569 (FGNTSLFSNSTTNQSNGISGNNLQQQSGGLFQNKQQPA). The segment at 536–732 (SLFSNSTTNQ…QSQNALQQQQ (197 aa)) is interaction with KAP95, not MEX67. 3 GLFG repeats span residues 572-575 (GLFG), 585-588 (GLFG), and 604-607 (GLFG). Polar residues predominate over residues 588 to 603 (GNNQVANQNNPASTSG). The stretch at 616–617 (FG) is one FG 19 repeat. Residues 630 to 633 (GIFG) form a GLFG 24; approximate repeat. 3 GLFG repeats span residues 648-651 (GLFG), 665-668 (GLFG), and 683-686 (GLFG). The segment covering 678-691 (SNGSTGLFGSNNTS) has biased composition (low complexity). Disordered stretches follow at residues 678–736 (SNGS…QQQR) and 868–939 (SEEK…ENVA). The segment covering 692 to 708 (QSTNAGGLFQNNTSTNT) has biased composition (polar residues). Residues 719–736 (QSMAQSQNALQQQQQQQR) are compositionally biased toward low complexity. A Phosphoserine modification is found at Ser886. The span at 916 to 939 (NDGEDSATKHHSRNMDEENKENVA) shows a compositional bias: basic and acidic residues. Residues 967–1109 (NENYYISPSL…GTYVFIVNHA (143 aa)) enclose the Peptidase S59 domain. Residues 967 to 1113 (NENYYISPSL…FIVNHAAEQT (147 aa)) are interaction with NUP82 NPC subcomplex. Residues 969–1108 (NYYISPSLDT…SGTYVFIVNH (140 aa)) form a nucleoporin RNA-binding motif (NRM) region.

This sequence belongs to the nucleoporin GLFG family. In terms of assembly, component of the nuclear pore complex (NPC). NPC constitutes the exclusive means of nucleocytoplasmic transport. NPCs allow the passive diffusion of ions and small molecules and the active, nuclear transport receptor-mediated bidirectional transport of macromolecules such as proteins, RNAs, ribonucleoparticles (RNPs), and ribosomal subunits across the nuclear envelope. Due to its 8-fold rotational symmetry, all subunits are present with 8 copies or multiples thereof. NUP116 interacts with the NUP82 subcomplex and GLE2. Through its FG repeats it interacts with numerous karyopherins including KAP95, PSE1 (GSP1-GDP dependent), MEX67, and to homomeric RNA. Interacts with CEX1. Interacts (via N-terminus) with AFG2 (via N-terminus).

Its subcellular location is the nucleus. It localises to the nuclear pore complex. The protein localises to the nucleus membrane. Functions as a component of the nuclear pore complex (NPC). NPC components, collectively referred to as nucleoporins (NUPs), can play the role of both NPC structural components and of docking or interaction partners for transiently associated nuclear transport factors. Active directional transport is assured by both, a Phe-Gly (FG) repeat affinity gradient for these transport factors across the NPC and a transport cofactor concentration gradient across the nuclear envelope (GSP1 and GSP2 GTPases associated predominantly with GTP in the nucleus, with GDP in the cytoplasm). Plays an important role in several nuclear export and import pathways including poly(A)+ RNA, tRNA, pre-ribosome, and protein transport. By binding ATPase AFG2, promotes AFG2-mediated release of shuttling protein RLP24 from pre-60S ribosomal particles. The protein is Nucleoporin NUP116/NSP116 (NUP116) of Saccharomyces cerevisiae (strain ATCC 204508 / S288c) (Baker's yeast).